Here is an 800-residue protein sequence, read N- to C-terminus: MANILKKLYNADKRELKRFEKIADQVESYADQMAALSDEELQAKTPEFRSRIEKGESLDDLLPEAFAVSREASKRVLGLYPFRVQILGGIALHRGNIAEMMTGEGKTLTATMPVYLNALSGKGVHVVTVNEYLSSRDETEMGQLYRWLGLTVGLNVSTMSPEEKRKAYACDVTYSTNSELGFDYLRDNMVVYKEQMVQRPLNYAIIDEVDSILIDEARTPLIISGEAEQANADYVRADRFVKKLVEDKSDNDADDDEDHGDYKIDWPTKTISLTRTGIQKACDHFGLKNLYDVENQKLVHHIDQALRANYIMLKDIDYVVQDGEVLIVDSFTGRVMEGRRFSDGLHQAIEAKEGVKIQEESQTQATITYQNYFRMYQKLSGMTGTAKTEEEEFREIYNMEVITIPTNRPVIRQDMPDLLYPTLDSKFKAVVDEIKERHAKGQPILVGTVSIESSERLSHMLDKEHIPHAVLNAKNHAKEAAIIMNAGQRGAVTIATNMAGRGTDIKLGPGVKELGGLAVIGTERHESRRIDNQLRGRSGRQGDPGYTRFYLSLEDDLMKRFGGDRVKDFLDRLSDNDDDKVIESRLITRQVESAQKRVEGNNYDTRKQTLQYDDVMRIQREIIYKERMQVIDEQQSLKSVLMPMIHRTIDHQVDMFTQGDRSTWRLDSLRDFIVSSLASEEYVDSEIDFKTFTPDALKQQLYQLVEDNYQEKEAALADPEQMLEFEKVVILRVVDEHWTNHIDAMDQLRQSIGLRGYGQLNPLVEYQDSGYNMFEEMISDIEFDVTRLFMKAQIRNNLSR.

Residues Gln-85, 103 to 107 (GEGKT), and Asp-504 each bind ATP.

It belongs to the SecA family. As to quaternary structure, monomer and homodimer. Part of the essential Sec protein translocation apparatus which comprises SecA, SecYEG and auxiliary proteins SecDF. Other proteins may also be involved.

It localises to the cell membrane. The protein resides in the cytoplasm. It carries out the reaction ATP + H2O + cellular proteinSide 1 = ADP + phosphate + cellular proteinSide 2.. In terms of biological role, part of the Sec protein translocase complex. Interacts with the SecYEG preprotein conducting channel. Has a central role in coupling the hydrolysis of ATP to the transfer of proteins into and across the cell membrane, serving as an ATP-driven molecular motor driving the stepwise translocation of polypeptide chains across the membrane. The polypeptide is Protein translocase subunit SecA (Lactobacillus delbrueckii subsp. bulgaricus (strain ATCC 11842 / DSM 20081 / BCRC 10696 / JCM 1002 / NBRC 13953 / NCIMB 11778 / NCTC 12712 / WDCM 00102 / Lb 14)).